Reading from the N-terminus, the 305-residue chain is Putative glutamine--fructose-6-phosphate aminotransferase [isomerizing] (305 aa).

The active-site Nucleophile; for GATase activity is cysteine 2. The region spanning 2-305 (CGIFGYCNFL…RLCITSAVCE (304 aa)) is the Glutamine amidotransferase type-2 domain.

The enzyme catalyses D-fructose 6-phosphate + L-glutamine = D-glucosamine 6-phosphate + L-glutamate. The protein operates within nucleotide-sugar biosynthesis; UDP-N-acetyl-alpha-D-glucosamine biosynthesis; alpha-D-glucosamine 6-phosphate from D-fructose 6-phosphate: step 1/1. In terms of biological role, involved in amino sugar synthesis (formation of chitin, supplies the amino sugars of asparagine-linked oligosaccharides of glycoproteins). In Saccharomyces cerevisiae (strain Lalvin EC1118 / Prise de mousse) (Baker's yeast), this protein is Putative glutamine--fructose-6-phosphate aminotransferase [isomerizing].